Here is a 429-residue protein sequence, read N- to C-terminus: Histidine--tRNA ligase (429 aa).

Belongs to the class-II aminoacyl-tRNA synthetase family. Homodimer.

It localises to the cytoplasm. The enzyme catalyses tRNA(His) + L-histidine + ATP = L-histidyl-tRNA(His) + AMP + diphosphate + H(+). This Dechloromonas aromatica (strain RCB) protein is Histidine--tRNA ligase.